A 55-amino-acid chain; its full sequence is Large ribosomal subunit protein bL33 (55 aa).

The protein belongs to the bacterial ribosomal protein bL33 family.

The polypeptide is Large ribosomal subunit protein bL33 (Rhizobium meliloti (strain 1021) (Ensifer meliloti)).